Here is a 207-residue protein sequence, read N- to C-terminus: MANVTLFDQTGKEAGQVVLNDAVFGIEPNESVVFDVIISQRASLRQGTHAVKNRSAVSGGGRKPWRQKGTGRARQGSIRSPQWRGGGVVFGPTPRSYGYKLPQKVRRLALKSVYSEKVAENKFVAVDALSFTAPKTAEFAKVLAALSIDSKVLVILEEGNEFAALSARNLPNVKVATATTASVLDIANSDKLLVTQAAISKIEEVLA.

The tract at residues 49 to 78 (HAVKNRSAVSGGGRKPWRQKGTGRARQGSI) is disordered.

This sequence belongs to the universal ribosomal protein uL4 family. Part of the 50S ribosomal subunit.

One of the primary rRNA binding proteins, this protein initially binds near the 5'-end of the 23S rRNA. It is important during the early stages of 50S assembly. It makes multiple contacts with different domains of the 23S rRNA in the assembled 50S subunit and ribosome. Its function is as follows. Forms part of the polypeptide exit tunnel. This Streptococcus pneumoniae serotype 19F (strain G54) protein is Large ribosomal subunit protein uL4.